Reading from the N-terminus, the 265-residue chain is uncharacterized protein (265 aa).

Residue glutamate 47 is part of the active site.

The protein belongs to the PhzF family.

This is an uncharacterized protein from Halalkalibacterium halodurans (strain ATCC BAA-125 / DSM 18197 / FERM 7344 / JCM 9153 / C-125) (Bacillus halodurans).